An 82-amino-acid polypeptide reads, in one-letter code: RNA-binding protein KhpA (82 aa).

Residues 35 to 82 form the KH domain; it reads STILELRVSQSDVGKIIGRRGRIARAIRTLLGACAAKTNRRVQLEILD.

Belongs to the KhpA RNA-binding protein family. Forms a complex with KhpB.

Its subcellular location is the cytoplasm. A probable RNA chaperone. Forms a complex with KhpB which binds to cellular RNA and controls its expression. Plays a role in peptidoglycan (PG) homeostasis and cell length regulation. This Borreliella burgdorferi (strain ATCC 35210 / DSM 4680 / CIP 102532 / B31) (Borrelia burgdorferi) protein is RNA-binding protein KhpA.